Here is a 237-residue protein sequence, read N- to C-terminus: MTSRLFALIPCAGTGSRSGAAMPKQYRTVAGRDMLHFSLAAFDACSEFAQTLVVIAPDDAHFDARRFGGLRFAVRRSGGASRQASVLNGLHALAEFGAHDDDWVLVHDAARPGITPALIRTLVGALKDDTVGGIMALPVADTLKRIDANSADGRIARTEARDGLWQAQTPQMFRIGMLRAAILRAQADGHDLTDEASAIEWLGHAPKLVQGSLRNFKVTYPEDFDLAEAILSRPAVS.

This sequence belongs to the IspD/TarI cytidylyltransferase family. IspD subfamily.

It catalyses the reaction 2-C-methyl-D-erythritol 4-phosphate + CTP + H(+) = 4-CDP-2-C-methyl-D-erythritol + diphosphate. It functions in the pathway isoprenoid biosynthesis; isopentenyl diphosphate biosynthesis via DXP pathway; isopentenyl diphosphate from 1-deoxy-D-xylulose 5-phosphate: step 2/6. Its function is as follows. Catalyzes the formation of 4-diphosphocytidyl-2-C-methyl-D-erythritol from CTP and 2-C-methyl-D-erythritol 4-phosphate (MEP). The protein is 2-C-methyl-D-erythritol 4-phosphate cytidylyltransferase of Paraburkholderia xenovorans (strain LB400).